The sequence spans 135 residues: Putative pre-16S rRNA nuclease (135 aa).

This sequence belongs to the YqgF nuclease family.

The protein localises to the cytoplasm. Functionally, could be a nuclease involved in processing of the 5'-end of pre-16S rRNA. The sequence is that of Putative pre-16S rRNA nuclease from Maridesulfovibrio salexigens (strain ATCC 14822 / DSM 2638 / NCIMB 8403 / VKM B-1763) (Desulfovibrio salexigens).